A 170-amino-acid polypeptide reads, in one-letter code: Ergosterol biosynthetic protein 28 (170 aa).

3 helical membrane-spanning segments follow: residues 7 to 27 (FLPE…IISI), 116 to 136 (TLAY…LFVF), and 141 to 161 (FGLP…WMPL).

The protein belongs to the ERG28 family. As to quaternary structure, heterotetramer of ERG25, ERG26, ERG27 and ERG28. ERG28 acts as a scaffold to tether ERG27 and other 4,4-demethylation-related enzymes, forming a demethylation enzyme complex, in the endoplasmic reticulum.

The protein localises to the endoplasmic reticulum membrane. The protein operates within steroid metabolism; ergosterol biosynthesis. Sterol 24-C-methyltransferase; part of the third module of ergosterol biosynthesis pathway that includes the late steps of the pathway. ERG28 has a role as a scaffold to help anchor the catalytic components of the C-4 demethylation complex ERG25, ERG26 and ERG27 to the endoplasmic reticulum. The third module or late pathway involves the ergosterol synthesis itself through consecutive reactions that mainly occur in the endoplasmic reticulum (ER) membrane. Firstly, the squalene synthase ERG9 catalyzes the condensation of 2 farnesyl pyrophosphate moieties to form squalene, which is the precursor of all steroids. Squalene synthase is crucial for balancing the incorporation of farnesyl diphosphate (FPP) into sterol and nonsterol isoprene synthesis. Secondly, squalene is converted into lanosterol by the consecutive action of the squalene epoxidase ERG1 and the lanosterol synthase ERG7. Then, the delta(24)-sterol C-methyltransferase ERG6 methylates lanosterol at C-24 to produce eburicol. Eburicol is the substrate of the sterol 14-alpha demethylase encoded by CYP51A, CYP51B and CYP51C, to yield 4,4,24-trimethyl ergosta-8,14,24(28)-trienol. CYP51B encodes the enzyme primarily responsible for sterol 14-alpha-demethylation, and plays an essential role in ascospore formation. CYP51A encodes an additional sterol 14-alpha-demethylase, induced on ergosterol depletion and responsible for the intrinsic variation in azole sensitivity. The third CYP51 isoform, CYP51C, does not encode a sterol 14-alpha-demethylase, but is required for full virulence on host wheat ears. The C-14 reductase ERG24 then reduces the C14=C15 double bond which leads to 4,4-dimethylfecosterol. A sequence of further demethylations at C-4, involving the C-4 demethylation complex containing the C-4 methylsterol oxidases ERG25, the sterol-4-alpha-carboxylate 3-dehydrogenase ERG26 and the 3-keto-steroid reductase ERG27, leads to the production of fecosterol via 4-methylfecosterol. ERG28 has a role as a scaffold to help anchor ERG25, ERG26 and ERG27 to the endoplasmic reticulum. The C-8 sterol isomerase ERG2 then catalyzes the reaction which results in unsaturation at C-7 in the B ring of sterols and thus converts fecosterol to episterol. The sterol-C5-desaturases ERG3A and ERG3BB then catalyze the introduction of a C-5 double bond in the B ring to produce 5-dehydroepisterol. The C-22 sterol desaturases ERG5A and ERG5B further convert 5-dehydroepisterol into ergosta-5,7,22,24(28)-tetraen-3beta-ol by forming the C-22(23) double bond in the sterol side chain. Finally, ergosta-5,7,22,24(28)-tetraen-3beta-ol is substrate of the C-24(28) sterol reductase ERG4 to produce ergosterol. The protein is Ergosterol biosynthetic protein 28 of Gibberella zeae (strain ATCC MYA-4620 / CBS 123657 / FGSC 9075 / NRRL 31084 / PH-1) (Wheat head blight fungus).